Reading from the N-terminus, the 205-residue chain is Outer-membrane lipoprotein LolB (205 aa).

Residues methionine 1–glycine 17 form the signal peptide. Residue cysteine 18 is the site of N-palmitoyl cysteine attachment. Cysteine 18 is lipidated: S-diacylglycerol cysteine.

This sequence belongs to the LolB family. Monomer.

It is found in the cell outer membrane. Its function is as follows. Plays a critical role in the incorporation of lipoproteins in the outer membrane after they are released by the LolA protein. This chain is Outer-membrane lipoprotein LolB, found in Pseudomonas paraeruginosa (strain DSM 24068 / PA7) (Pseudomonas aeruginosa (strain PA7)).